The following is a 467-amino-acid chain: Ammonium transporter Rh type C (467 aa).

Over 1 to 3 (MRL) the chain is Cytoplasmic. The chain crosses the membrane as a helical span at residues 4 to 24 (RLPVVCFLWEIAMIVLFGIFV). Over 25–55 (RYNDEADPHWSEFMKAQNITSDIQNDYYFRY) the chain is Extracellular. N42 carries an N-linked (GlcNAc...) asparagine glycan. A helical membrane pass occupies residues 56 to 76 (PSFQDVHVMIFVGFGFLMTFL). Residues 77-80 (KRYG) lie on the Cytoplasmic side of the membrane. A helical membrane pass occupies residues 81-101 (FGSVAFNFLLAAFGIQWAILM). The Extracellular segment spans residues 102 to 119 (QGWFHTFKNGKILIGVES). A helical transmembrane segment spans residues 120–139 (LINADFCVGSVCIAFGAILG). Residues 140–145 (KVSPVQ) are Cytoplasmic-facing. Residues 146–168 (IMVMTLFQVTLFAVNEWILLNLL) traverse the membrane as a helical segment. At 169 to 173 (HVNDA) the chain is on the extracellular side. A helical transmembrane segment spans residues 174 to 194 (GGSMTIHTFGAYFGLTVAWIL). Over 195–213 (NRPRLKQTNDKEGSVYVSD) the chain is Cytoplasmic. A helical transmembrane segment spans residues 214–234 (LFSMIGTLFLWMFWPSFNSAV). The Extracellular portion of the chain corresponds to 235–245 (SYHGDAQHRAA). The helical transmembrane segment at 246–266 (INTYCSLAACVLTTVAISSVV) threads the bilayer. At 267-271 (NKKGK) the chain is on the cytoplasmic side. Residues 272–292 (LEMVHIQNATLAGGVAVGTAA) traverse the membrane as a helical segment. Residues 293-295 (EMM) lie on the Extracellular side of the membrane. A helical transmembrane segment spans residues 296–316 (LTPYGSLIVGFICGIVSTLGF). Residues 317–337 (TYCSPFLSNKLRLHDTCGIHN) lie on the Cytoplasmic side of the membrane. The chain crosses the membrane as a helical span at residues 338–358 (LHAMPGLIGGIVGAVTAACAT). The Extracellular portion of the chain corresponds to 359–390 (EAVYTADGLKKMFRFEGDYATRTPSMQGGYQA). Residues 391–411 (AGLCVSLAFGLVGGTVVGCIL) traverse the membrane as a helical segment. At 412 to 467 (KLPIWGDPSDENCFDDEVYWELPEEDEEEHLGAANQYVTHLPENFKLPDRTEVAFK) the chain is on the cytoplasmic side.

The protein belongs to the ammonium transporter (TC 2.A.49) family. Rh subfamily. In terms of assembly, homotrimer.

The protein localises to the apical cell membrane. Its function is as follows. Functions as an ammonia transporter. The polypeptide is Ammonium transporter Rh type C (rhcg) (Xenopus tropicalis (Western clawed frog)).